The primary structure comprises 341 residues: THO complex subunit 6 homolog (341 aa).

7 WD repeats span residues 22–61 (RLHM…SSEA), 74–112 (AHDG…GCKE), 124–165 (LEVP…RALR), 166–205 (GHTD…EVQT), 215–254 (SRPH…PTTV), 256–293 (PIRA…KAQV), and 295–339 (GSSP…AFSL). Residue Ser180 is modified to Phosphoserine.

Belongs to the WD repeat THOC6 family. Component of the THO subcomplex, which is composed of THOC1, THOC2, THOC3, THOC5, THOC6 and THOC7. The THO subcomplex interacts with DDX39B to form the THO-DDX39B complex which multimerizes into a 28-subunit tetrameric assembly. Component of the transcription/export (TREX) complex at least composed of ALYREF/THOC4, DDX39B, SARNP/CIP29, CHTOP and the THO subcomplex; in the complex interacts with THOC5; together with THOC5 and THOC7, plays a key structural role in the oligomerization of the THO-DDX39B complex. TREX seems to have a dynamic structure involving ATP-dependent remodeling.

The protein localises to the nucleus. It is found in the nucleus speckle. In terms of biological role, component of the THO subcomplex of the TREX complex which is thought to couple mRNA transcription, processing and nuclear export, and which specifically associates with spliced mRNA and not with unspliced pre-mRNA. Plays a key structural role in the oligomerization of the THO-DDX39B complex. TREX is recruited to spliced mRNAs by a transcription-independent mechanism, binds to mRNA upstream of the exon-junction complex (EJC) and is recruited in a splicing- and cap-dependent manner to a region near the 5' end of the mRNA where it functions in mRNA export to the cytoplasm via the TAP/NXF1 pathway. Plays a role in apoptosis negative control involved in brain development. In Mus musculus (Mouse), this protein is THO complex subunit 6 homolog (Thoc6).